Consider the following 87-residue polypeptide: Small ribosomal subunit protein uS17 (87 aa).

Belongs to the universal ribosomal protein uS17 family. As to quaternary structure, part of the 30S ribosomal subunit.

Functionally, one of the primary rRNA binding proteins, it binds specifically to the 5'-end of 16S ribosomal RNA. The chain is Small ribosomal subunit protein uS17 from Macrococcus caseolyticus (strain JCSC5402) (Macrococcoides caseolyticum).